A 102-amino-acid polypeptide reads, in one-letter code: Aspartyl/glutamyl-tRNA(Asn/Gln) amidotransferase subunit C (102 aa).

Belongs to the GatC family. Heterotrimer of A, B and C subunits.

It carries out the reaction L-glutamyl-tRNA(Gln) + L-glutamine + ATP + H2O = L-glutaminyl-tRNA(Gln) + L-glutamate + ADP + phosphate + H(+). The enzyme catalyses L-aspartyl-tRNA(Asn) + L-glutamine + ATP + H2O = L-asparaginyl-tRNA(Asn) + L-glutamate + ADP + phosphate + 2 H(+). Functionally, allows the formation of correctly charged Asn-tRNA(Asn) or Gln-tRNA(Gln) through the transamidation of misacylated Asp-tRNA(Asn) or Glu-tRNA(Gln) in organisms which lack either or both of asparaginyl-tRNA or glutaminyl-tRNA synthetases. The reaction takes place in the presence of glutamine and ATP through an activated phospho-Asp-tRNA(Asn) or phospho-Glu-tRNA(Gln). In Bordetella parapertussis (strain 12822 / ATCC BAA-587 / NCTC 13253), this protein is Aspartyl/glutamyl-tRNA(Asn/Gln) amidotransferase subunit C.